The sequence spans 516 residues: Cytochrome P450 1A2 (516 aa).

O-linked (GlcNAc) serine glycosylation is present at Ser-69. Position 226 (Phe-226) interacts with substrate. Cys-458 serves as a coordination point for heme.

The protein belongs to the cytochrome P450 family. In terms of assembly, interacts with PGRMC1; the interaction requires PGRMC1 homodimerization. Heme serves as cofactor. In terms of tissue distribution, liver.

Its subcellular location is the endoplasmic reticulum membrane. The protein localises to the microsome membrane. It carries out the reaction an organic molecule + reduced [NADPH--hemoprotein reductase] + O2 = an alcohol + oxidized [NADPH--hemoprotein reductase] + H2O + H(+). The catalysed reaction is 17beta-estradiol + reduced [NADPH--hemoprotein reductase] + O2 = 2-hydroxy-17beta-estradiol + oxidized [NADPH--hemoprotein reductase] + H2O + H(+). The enzyme catalyses 17beta-estradiol + reduced [NADPH--hemoprotein reductase] + O2 = 4-hydroxy-17beta-estradiol + oxidized [NADPH--hemoprotein reductase] + H2O + H(+). It catalyses the reaction estrone + reduced [NADPH--hemoprotein reductase] + O2 = 2-hydroxyestrone + oxidized [NADPH--hemoprotein reductase] + H2O + H(+). It carries out the reaction estrone + reduced [NADPH--hemoprotein reductase] + O2 = 4-hydroxyestrone + oxidized [NADPH--hemoprotein reductase] + H2O + H(+). The catalysed reaction is cholesterol + reduced [NADPH--hemoprotein reductase] + O2 = 25-hydroxycholesterol + oxidized [NADPH--hemoprotein reductase] + H2O + H(+). The enzyme catalyses all-trans-retinol + reduced [NADPH--hemoprotein reductase] + O2 = all-trans-retinal + oxidized [NADPH--hemoprotein reductase] + 2 H2O + H(+). It catalyses the reaction all-trans-retinal + reduced [NADPH--hemoprotein reductase] + O2 = all-trans-retinoate + oxidized [NADPH--hemoprotein reductase] + H2O + 2 H(+). It carries out the reaction (5Z,8Z,11Z,14Z)-eicosatetraenoate + reduced [NADPH--hemoprotein reductase] + O2 = (14R,15S)-epoxy-(5Z,8Z,11Z)-eicosatrienoate + oxidized [NADPH--hemoprotein reductase] + H2O + H(+). The catalysed reaction is (5Z,8Z,11Z,14Z)-eicosatetraenoate + reduced [NADPH--hemoprotein reductase] + O2 = (14S,15R)-epoxy-(5Z,8Z,11Z)-eicosatrienoate + oxidized [NADPH--hemoprotein reductase] + H2O + H(+). The enzyme catalyses (5Z,8Z,11Z,14Z,17Z)-eicosapentaenoate + reduced [NADPH--hemoprotein reductase] + O2 = (17R,18S)-epoxy-(5Z,8Z,11Z,14Z)-eicosatetraenoate + oxidized [NADPH--hemoprotein reductase] + H2O + H(+). It catalyses the reaction (4Z,7Z,10Z,13Z,16Z,19Z)-docosahexaenoate + reduced [NADPH--hemoprotein reductase] + O2 = (19R,20S)-epoxy-(4Z,7Z,10Z,13Z,16Z)-docosapentaenoate + oxidized [NADPH--hemoprotein reductase] + H2O + H(+). It carries out the reaction (5S)-hydroperoxy-(6E,8Z,11Z,14Z)-eicosatetraenoate = 5-oxo-(6E,8Z,11Z,14Z)-eicosatetraenoate + H2O. The catalysed reaction is (12S)-hydroperoxy-(5Z,8Z,10E,14Z)-eicosatetraenoate = 12-oxo-(5Z,8Z,10E,14Z)-eicosatetraenoate + H2O. The enzyme catalyses (15S)-hydroperoxy-(5Z,8Z,11Z,13E)-eicosatetraenoate = 15-oxo-(5Z,8Z,11Z,13E)-eicosatetraenoate + H2O. It catalyses the reaction (13S)-hydroperoxy-(9Z,11E)-octadecadienoate = 13-oxo-(9Z,11E)-octadecadienoate + H2O. It carries out the reaction (5Z,8Z,11Z,14Z)-eicosatetraenoate + reduced [NADPH--hemoprotein reductase] + O2 = 13-hydroxy-(5Z,8Z,11Z,14Z)-eicosatetraenoate + oxidized [NADPH--hemoprotein reductase] + H2O + H(+). The catalysed reaction is (5Z,8Z,11Z,14Z)-eicosatetraenoate + reduced [NADPH--hemoprotein reductase] + O2 = 19-hydroxy-(5Z,8Z,11Z,14Z)-eicosatetraenoate + oxidized [NADPH--hemoprotein reductase] + H2O + H(+). The enzyme catalyses (9Z,12Z)-octadecadienoate + reduced [NADPH--hemoprotein reductase] + O2 = 11-hydroxy-(9Z,12Z)-octadecadienoate + oxidized [NADPH--hemoprotein reductase] + H2O + H(+). The protein operates within cofactor metabolism; retinol metabolism. It participates in steroid metabolism; cholesterol metabolism. It functions in the pathway lipid metabolism; arachidonate metabolism. In terms of biological role, a cytochrome P450 monooxygenase involved in the metabolism of various endogenous substrates, including fatty acids, steroid hormones and vitamins. Mechanistically, uses molecular oxygen inserting one oxygen atom into a substrate, and reducing the second into a water molecule, with two electrons provided by NADPH via cytochrome P450 reductase (NADPH--hemoprotein reductase). Catalyzes the hydroxylation of carbon-hydrogen bonds. Exhibits high catalytic activity for the formation of hydroxyestrogens from estrone (E1) and 17beta-estradiol (E2), namely 2-hydroxy E1 and E2. Metabolizes cholesterol toward 25-hydroxycholesterol, a physiological regulator of cellular cholesterol homeostasis. May act as a major enzyme for all-trans retinoic acid biosynthesis in the liver. Catalyzes two successive oxidative transformation of all-trans retinol to all-trans retinal and then to the active form all-trans retinoic acid. Primarily catalyzes stereoselective epoxidation of the last double bond of polyunsaturated fatty acids (PUFA), displaying a strong preference for the (R,S) stereoisomer. Catalyzes bisallylic hydroxylation and omega-1 hydroxylation of PUFA. May also participate in eicosanoids metabolism by converting hydroperoxide species into oxo metabolites (lipoxygenase-like reaction, NADPH-independent). Plays a role in the oxidative metabolism of xenobiotics. Catalyzes the N-hydroxylation of heterocyclic amines and the O-deethylation of phenacetin. Metabolizes caffeine via N3-demethylation. The polypeptide is Cytochrome P450 1A2 (Homo sapiens (Human)).